The following is a 369-amino-acid chain: Peptide chain release factor 2 (369 aa).

Position 249 is an N5-methylglutamine (Gln-249).

Belongs to the prokaryotic/mitochondrial release factor family. Methylated by PrmC. Methylation increases the termination efficiency of RF2.

Its subcellular location is the cytoplasm. In terms of biological role, peptide chain release factor 2 directs the termination of translation in response to the peptide chain termination codons UGA and UAA. The polypeptide is Peptide chain release factor 2 (Corynebacterium diphtheriae (strain ATCC 700971 / NCTC 13129 / Biotype gravis)).